Consider the following 178-residue polypeptide: Large ribosomal subunit protein uL6 (178 aa).

Over residues 155-169 (PYKGKGIKYDNEQIR) the composition is skewed to basic and acidic residues. Positions 155-178 (PYKGKGIKYDNEQIRRKAGKSGGK) are disordered.

It belongs to the universal ribosomal protein uL6 family. In terms of assembly, part of the 50S ribosomal subunit.

In terms of biological role, this protein binds to the 23S rRNA, and is important in its secondary structure. It is located near the subunit interface in the base of the L7/L12 stalk, and near the tRNA binding site of the peptidyltransferase center. This Nitratidesulfovibrio vulgaris (strain DSM 19637 / Miyazaki F) (Desulfovibrio vulgaris) protein is Large ribosomal subunit protein uL6.